The primary structure comprises 238 residues: Ubiquinone biosynthesis O-methyltransferase (238 aa).

The S-adenosyl-L-methionine site is built by R40, G59, D81, and M126.

This sequence belongs to the methyltransferase superfamily. UbiG/COQ3 family.

The catalysed reaction is a 3-demethylubiquinol + S-adenosyl-L-methionine = a ubiquinol + S-adenosyl-L-homocysteine + H(+). It catalyses the reaction a 3-(all-trans-polyprenyl)benzene-1,2-diol + S-adenosyl-L-methionine = a 2-methoxy-6-(all-trans-polyprenyl)phenol + S-adenosyl-L-homocysteine + H(+). The protein operates within cofactor biosynthesis; ubiquinone biosynthesis. Its function is as follows. O-methyltransferase that catalyzes the 2 O-methylation steps in the ubiquinone biosynthetic pathway. This is Ubiquinone biosynthesis O-methyltransferase from Neisseria meningitidis serogroup C (strain 053442).